Consider the following 540-residue polypeptide: Chaperonin GroEL 1 (540 aa).

ATP-binding positions include 29-32 (TLGP), 86-90 (DGTTT), Gly413, 477-479 (NAA), and Asp493.

Belongs to the chaperonin (HSP60) family. Forms a cylinder of 14 subunits composed of two heptameric rings stacked back-to-back. Interacts with the co-chaperonin GroES.

Its subcellular location is the cytoplasm. It catalyses the reaction ATP + H2O + a folded polypeptide = ADP + phosphate + an unfolded polypeptide.. Functionally, together with its co-chaperonin GroES, plays an essential role in assisting protein folding. The GroEL-GroES system forms a nano-cage that allows encapsulation of the non-native substrate proteins and provides a physical environment optimized to promote and accelerate protein folding. This is Chaperonin GroEL 1 from Salinispora arenicola (strain CNS-205).